Consider the following 548-residue polypeptide: uncharacterized protein (548 aa).

2 short-chain dehydrogenase/reductase regions span residues 1–250 (MDDR…WMSV) and 271–548 (PVED…LLSP). NADP(+) is bound at residue 12–37 (IVVTGAAGGIGRALVDIFAANGDVVV). S141 is a substrate binding site. Y154 functions as the Proton acceptor in the catalytic mechanism. 280 to 304 (VIVMGGATGVGAAIARRFAENGDTV) contacts NADP(+). Y420 acts as the Proton acceptor in catalysis.

This sequence belongs to the short-chain dehydrogenases/reductases (SDR) family.

This is an uncharacterized protein from Sinorhizobium fredii (strain NBRC 101917 / NGR234).